The chain runs to 567 residues: CTD small phosphatase-like protein 2 (567 aa).

Disordered regions lie at residues 31–53, 100–150, and 280–361; these read QQQQ…HQCE, ASST…FSSV, and NKEN…EEFN. Composition is skewed to low complexity over residues 100-118, 130-150, and 286-297; these read ASST…SPLK, SMND…FSSV, and ESNNSNSNSNSS. Polar residues predominate over residues 298–308; it reads PSFFHNLQQHP. A compositionally biased stretch (low complexity) spans 309–332; the sequence is TSAATTTTTTTTTITTTSATTSII. Residues 337–360 are compositionally biased toward acidic residues; it reads NSDDEIDDECDDESEEEEEDEEEF. Residues 386-544 form the FCP1 homology domain; it reads HSSPKISLVL…LQLVPFLESL (159 aa).

This sequence belongs to the CTDSPL2 family.

In terms of biological role, probable phosphatase. The sequence is that of CTD small phosphatase-like protein 2 (ctdspl2) from Dictyostelium discoideum (Social amoeba).